The following is a 285-amino-acid chain: Aquaporin PIP2-5 (285 aa).

2 helical membrane-spanning segments follow: residues 38–58 (AVIAEFVATLLFLYITVATVI) and 75–95 (CGGVGVLGIAWAFGGMIFILV). The NPA 1 signature appears at 107–109 (NPA). A run of 3 helical transmembrane segments spans residues 126-146 (LLYIVAQCLGAICGVGLVKGF), 168-188 (GTGLAAEIIGTFVLVYTVFSA), and 202-222 (VLAPLPIGFAVFMVHLATIPI). The short motif at 228-230 (NPA) is the NPA 2 element. Residues 250–270 (IFWVGPFIGAAIAAAYHQYVL) form a helical membrane-spanning segment.

This sequence belongs to the MIP/aquaporin (TC 1.A.8) family. PIP (TC 1.A.8.11) subfamily. Homomers. May interact with PIP1-2 to form heteromers. In terms of tissue distribution, specifically expressed in roots, in the exodermis, endodermis and xylem parenchyma. Polar localization to the external periclinal side of epidermal cells in root apices.

Its subcellular location is the cell membrane. Water channel required to facilitate the transport of water across cell membrane. Its function is impaired by Hg(2+). May play a role in water uptake from the root surface. Active as homomers. Increased activity when heteromerization with PIP1-2. This Zea mays (Maize) protein is Aquaporin PIP2-5 (PIP2-5).